The following is a 264-amino-acid chain: Heavy metal-associated isoprenylated plant protein 17 (264 aa).

HMA domains follow at residues 32-95 (VTDA…KKIE) and 133-204 (IMEV…KERQ). A coiled-coil region spans residues 185–218 (SRKLNKKMHQKIKKAEKERQEWESEMMLREAEEE). Cys-261 bears the Cysteine methyl ester mark. Cys-261 is lipidated: S-farnesyl cysteine. A propeptide spans 262 to 264 (SIS) (removed in mature form).

This sequence belongs to the HIPP family.

In terms of biological role, probable heavy-metal-binding protein. This chain is Heavy metal-associated isoprenylated plant protein 17, found in Arabidopsis thaliana (Mouse-ear cress).